Here is a 1194-residue protein sequence, read N- to C-terminus: MARLRDSRSPSPAGSLSARKRKDDDRRDRDRRDGPVDHRRRSRSPIDRRYRDRDRDRGRDGRDRDSYRRRDRSIDRRDDDYYRGSRRDGDRRRSRDRGLDRLRSPDRRRDRSRDPDREYRPRRDDSRDRARVRREGTAESSSHRRDDVRARDQPKPGNTTAKENEPAKSTPTQPQTEAEKKAERLRKLQAMKQKHALKEAKEADVTAGLTRKLFMEMDQRASGAVVGSGTNSPAPASPAAAESPASPAPYVGKFDPKAIARNAKPARASSPVRLGDVKLGDVKVGAPVAAAASIAGQGKGAASGKAGLLQTGRPISTFGFNKSADALKTTAKRKIDMGDEEIIKRKLVKLPDLALENADDTPYADDDVAEDAEKDFDVLLAGTEEDRAEAQRLLRERREEQIQKESMAMEIDSAPSNIEVATEPVAQNPTAMDVDDEVDPLDAFMAGLEQTASGEESHSKADTLTEKKNGNIPPEAYFSDDDYGYEADGTDPTSILAMASKKKKKDIPTIDYSKLDLNPIRKNFWVEPYELSHMSEEELAELRLELDGIKVSGKNIPKPVQKWSQCGLTRPILDTIESLGFEKPTPIQMQALPVIMSGRDVIGVAKTGSGKTMAFALPMLRHVKDQDPVTGDDGAIALIMTPTRELCTQIYSDLQPFAKALKLRVVAAYGGNAIKDQIAELKRGAEIIVATPGRLIDLLAANGGRVTNLKRATYLVLDEADRMFDMGFEPQVMKIFNNVRPDRQTILFSATMPRIIDALTKKVLRDPVEITVGGRSVVAPEITQIVEVMDEGKKFNRLLELLGELYADDDDVRSLIFVERQEKADDLLRELLRRGYGCMSIHGGKDQEDRNSTISDFKKGVCPILIATSIAARGLDVKQLKLVINYDAPNHLEDYVHRAGRTGRAGNTGTAVTFITEEQENCASGIAKALEQSGQPVPDRLNEMRKAWKEKVKAGKAKDASGFGGKGLEKLDKDREAARMRERKTHKAEGEEDDVKEDAPAEDGEKKDKTKVAIQSAVSAIVSRDASKAETEDKHAIPAGAVKAGHHASSGKSGGALDKAASAISEINARLARAGQLRPGQPIDNKGPDAGAFHATLEINDFPQKARWAVTNRTNVAKILEATGTSITTKGNYYAPGKEPGPGQEPKLYILIEGDTEVVVGNALSELTRLLREGTMAAADAESRAPASGRYTIT.

Disordered stretches follow at residues 1 to 201 (MARL…KEAK), 224 to 248 (AVVGSGTNSPAPASPAAAESPASPA), and 452 to 484 (ASGEESHSKADTLTEKKNGNIPPEAYFSDDDYG). Basic and acidic residues-rich tracts occupy residues 21-37 (RKDDDRRDRDRRDGPVD) and 44-154 (SPID…RDQP). Residues 156–176 (PGNTTAKENEPAKSTPTQPQT) are compositionally biased toward polar residues. A compositionally biased stretch (basic and acidic residues) spans 177–186 (EAEKKAERLR). Positions 232 to 248 (SPAPASPAAAESPASPA) are enriched in low complexity. Residues 455-469 (EESHSKADTLTEKKN) are compositionally biased toward basic and acidic residues. The short motif at 561–589 (QKWSQCGLTRPILDTIESLGFEKPTPIQM) is the Q motif element. The region spanning 592–770 (LPVIMSGRDV…KKVLRDPVEI (179 aa)) is the Helicase ATP-binding domain. 605–612 (AKTGSGKT) contributes to the ATP binding site. Residues 718–721 (DEAD) carry the DEAD box motif. Residues 797 to 945 (RLLELLGELY…PVPDRLNEMR (149 aa)) form the Helicase C-terminal domain. Disordered regions lie at residues 952–1011 (VKAG…DKTK) and 1025–1056 (DASKAETEDKHAIPAGAVKAGHHASSGKSGGA). Basic and acidic residues-rich tracts occupy residues 967-980 (GLEKLDKDREAARM), 997-1011 (EDAPAEDGEKKDKTK), and 1025-1036 (DASKAETEDKHA).

This sequence belongs to the DEAD box helicase family. DDX46/PRP5 subfamily.

The protein resides in the nucleus. The enzyme catalyses ATP + H2O = ADP + phosphate + H(+). Functionally, ATP-dependent RNA helicase involved spliceosome assembly and in nuclear splicing. Catalyzes an ATP-dependent conformational change of U2 snRNP. Bridges U1 and U2 snRNPs and enables stable U2 snRNP association with intron RNA. This Neurospora crassa (strain ATCC 24698 / 74-OR23-1A / CBS 708.71 / DSM 1257 / FGSC 987) protein is Pre-mRNA-processing ATP-dependent RNA helicase prp-5 (prp-5).